Consider the following 266-residue polypeptide: MNQRLVYVVSDSGGETAELVVKAAASQFYASPVQVKRVPYVEDKTTLAEVVALAKMNQAIIAFTLVVPEMREFLLTEAAREGVVAYDIIGPLIEKMSDLFQLKPRYEPGQVRVLDEDYFKKIEAIEFAVKYDDGRDPRGILRADIVLIGVSRTSKTPLSQYLAHKRLKVANVPIVPEVEPPEQLFQVGPSKCFGLKISPDKLLSIRRERLKSLGLNDQAIYANMDRIKEELAYFDGVVKKIGCDVIDVTNKAVEETASIIMKKLKR.

Residue 149–156 (GVSRTSKT) participates in ADP binding.

It belongs to the pyruvate, phosphate/water dikinase regulatory protein family. PDRP subfamily.

It catalyses the reaction N(tele)-phospho-L-histidyl/L-threonyl-[pyruvate, phosphate dikinase] + ADP = N(tele)-phospho-L-histidyl/O-phospho-L-threonyl-[pyruvate, phosphate dikinase] + AMP + H(+). The enzyme catalyses N(tele)-phospho-L-histidyl/O-phospho-L-threonyl-[pyruvate, phosphate dikinase] + phosphate + H(+) = N(tele)-phospho-L-histidyl/L-threonyl-[pyruvate, phosphate dikinase] + diphosphate. Functionally, bifunctional serine/threonine kinase and phosphorylase involved in the regulation of the pyruvate, phosphate dikinase (PPDK) by catalyzing its phosphorylation/dephosphorylation. The sequence is that of Putative pyruvate, phosphate dikinase regulatory protein from Geobacillus thermodenitrificans (strain NG80-2).